The chain runs to 261 residues: Small ribosomal subunit protein uS2 (261 aa).

The disordered stretch occupies residues 222–261; that stretch reads GKALREQDGEANEEQPISEEEKKEVLEEAMSEEDFEGDKE. Acidic residues-rich tracts occupy residues 230–239 and 248–261; these read GEANEEQPIS and EEAM…GDKE.

It belongs to the universal ribosomal protein uS2 family.

This chain is Small ribosomal subunit protein uS2, found in Campylobacter lari (strain RM2100 / D67 / ATCC BAA-1060).